The chain runs to 884 residues: Alanine--tRNA ligase (884 aa).

H565, H569, C675, and H679 together coordinate Zn(2+).

The protein belongs to the class-II aminoacyl-tRNA synthetase family. It depends on Zn(2+) as a cofactor.

Its subcellular location is the cytoplasm. The catalysed reaction is tRNA(Ala) + L-alanine + ATP = L-alanyl-tRNA(Ala) + AMP + diphosphate. In terms of biological role, catalyzes the attachment of alanine to tRNA(Ala) in a two-step reaction: alanine is first activated by ATP to form Ala-AMP and then transferred to the acceptor end of tRNA(Ala). Also edits incorrectly charged Ser-tRNA(Ala) and Gly-tRNA(Ala) via its editing domain. The polypeptide is Alanine--tRNA ligase (Maricaulis maris (strain MCS10) (Caulobacter maris)).